We begin with the raw amino-acid sequence, 232 residues long: UPF0177 protein in abiGi 5'region (232 aa).

6 helical membrane-spanning segments follow: residues 12–32, 47–67, 86–106, 124–144, 165–185, and 206–226; these read YLSL…ILAY, VVAT…GILI, LLFL…SYTY, SIQI…APIF, IVSC…LIVY, and ILVH…LQVI.

Belongs to the UPF0177 family.

The protein resides in the cell membrane. The function of this protein is currently unknown, but it has been shown that it is not necessary for phage resistance. The protein is UPF0177 protein in abiGi 5'region of Lactococcus lactis subsp. cremoris (Streptococcus cremoris).